Here is a 288-residue protein sequence, read N- to C-terminus: Syntaxin-1A (288 aa).

The segment covering 1 to 13 (MKDRTQELRTAKD) has biased composition (basic and acidic residues). Residues 1-20 (MKDRTQELRTAKDSDDDDDV) form a disordered region. The Cytoplasmic portion of the chain corresponds to 1-265 (MKDRTQELRT…KYQSKARRKK (265 aa)). A phosphoserine mark is found at Ser14, Ser64, and Ser95. The stretch at 68 to 109 (DEKTKEELEELMSDIKKTANKVRSKLKSIEQSIEQEEGLNRS) forms a coiled coil. Position 188 is a phosphoserine; by DAPK1 (Ser188). One can recognise a t-SNARE coiled-coil homology domain in the interval 192 to 254 (LSEIETRHSE…ERAVSDTKKA (63 aa)). Residues Lys252, Lys253, and Lys256 each participate in a glycyl lysine isopeptide (Lys-Gly) (interchain with G-Cter in SUMO) cross-link. Residues 266–288 (IMIIICCVILGIIIASTIGGIFG) traverse the membrane as a helical; Anchor for type IV membrane protein segment.

The protein belongs to the syntaxin family. As to quaternary structure, part of the SNARE core complex containing SNAP25, VAMP2 and STX1A; this complex constitutes the basic catalytic machinery of the complex neurotransmitter release apparatus. The SNARE complex interacts with CPLX1. Interacts with STXBP1. The interaction with STXBP1 promotes assembly of the SNARE complex. Interacts (via C-terminus) with KCNB1 (via C-terminus); the interaction increases in a calcium-dependent manner and induces a pore-independent enhancement of exocytosis in neuroendocrine cells, chromaffin cells, pancreatic beta cells and from the soma of dorsal root ganglia (DRG) neurons. Interacts with SYTL4. Interacts with STXBP6. Interacts with PLCL1 (via C2 domain). Interacts with OTOF. Interacts with LGI3. Interacts (via the H3 domain) with SLC6A4 (via the N-terminus); this interaction regulates SLC4A6 channel conductance in thalamocortical neurons. Interacts with SYT6 and SYT8; the interaction is Ca(2+)-dependent. Interacts with VAMP8. Interacts with SNAP23. Interacts with VAPA and SYBU. Interacts with PRRT2. Interacts with SEPT8. Interacts with STXBP5L. Interacts with synaptotagmin-1/SYT1. Interacts with SEPTIN5; in the cerebellar cortex. Interacts with SEPTIN4; in the striatum. Phosphorylated by CK2. Phosphorylation at Ser-188 by DAPK1 significantly decreases its interaction with STXBP1. In terms of processing, (Microbial infection) Targeted and hydrolyzed by C.botulinum neurotoxin type C (BoNT/C), which hydrolyzes the 253-Lys-|-Ala-254 bond. Cleavage inhibits neurotransmitter release. Post-translationally, phosphorylated by CK2. Phosphorylation at Ser-188 by DAPK1 significantly decreases its interaction with STXBP1. Sumoylated, sumoylation is required for regulation of synaptic vesicle endocytosis. In terms of tissue distribution, expressed predominantly in cerebral cortex, hippocampus, cerebellum, adrenal medulla and retina with weak expression detected in non-neuronal tissues.

The protein localises to the cytoplasmic vesicle. It localises to the secretory vesicle. The protein resides in the synaptic vesicle membrane. It is found in the cell membrane. Its subcellular location is the synapse. The protein localises to the synaptosome. Functionally, plays an essential role in hormone and neurotransmitter calcium-dependent exocytosis and endocytosis. Part of the SNARE (Soluble NSF Attachment Receptor) complex composed of SNAP25, STX1A and VAMP2 which mediates the fusion of synaptic vesicles with the presynaptic plasma membrane. STX1A and SNAP25 are localized on the plasma membrane while VAMP2 resides in synaptic vesicles. The pairing of the three SNAREs from the N-terminal SNARE motifs to the C-terminal anchors leads to the formation of the SNARE complex, which brings membranes into close proximity and results in final fusion. Participates in the calcium-dependent regulation of acrosomal exocytosis in sperm. Also plays an important role in the exocytosis of hormones such as insulin or glucagon-like peptide 1 (GLP-1). This chain is Syntaxin-1A (Stx1a), found in Rattus norvegicus (Rat).